Reading from the N-terminus, the 80-residue chain is Defensin-like protein 1 (80 aa).

Residues Met-1–Ala-29 form the signal peptide. Gln-30 is subject to Pyrrolidone carboxylic acid. 4 cysteine pairs are disulfide-bonded: Cys-33-Cys-80, Cys-44-Cys-65, Cys-50-Cys-74, and Cys-54-Cys-76.

This sequence belongs to the DEFL family. Forms oligomers in its native state.

The protein resides in the secreted. Functionally, possesses antifungal activity sensitive to inorganic cations. This chain is Defensin-like protein 1 (AFP1), found in Raphanus sativus (Radish).